A 245-amino-acid chain; its full sequence is Ribonuclease PH (245 aa).

Phosphate-binding positions include R93 and 131–133 (GTR).

It belongs to the RNase PH family. In terms of assembly, homohexameric ring arranged as a trimer of dimers.

It catalyses the reaction tRNA(n+1) + phosphate = tRNA(n) + a ribonucleoside 5'-diphosphate. Phosphorolytic 3'-5' exoribonuclease that plays an important role in tRNA 3'-end maturation. Removes nucleotide residues following the 3'-CCA terminus of tRNAs; can also add nucleotides to the ends of RNA molecules by using nucleoside diphosphates as substrates, but this may not be physiologically important. Probably plays a role in initiation of 16S rRNA degradation (leading to ribosome degradation) during starvation. The polypeptide is Ribonuclease PH (Corynebacterium efficiens (strain DSM 44549 / YS-314 / AJ 12310 / JCM 11189 / NBRC 100395)).